The sequence spans 321 residues: Mitochondrial thiamine pyrophosphate carrier 1 (321 aa).

Helical transmembrane passes span 12 to 28 (GTRR…GLVS), 91 to 107 (LMYV…YRTT), 126 to 146 (FVAG…LDLL), 184 to 200 (AAVG…FATY), 221 to 237 (AAGV…MFPL), and 284 to 301 (GLTV…VTMW). Solcar repeat units lie at residues 12–110 (GTRR…TTQA), 120–206 (PPSA…LRPP), and 214–309 (PFGS…SLRL).

This sequence belongs to the mitochondrial carrier (TC 2.A.29) family.

Its subcellular location is the mitochondrion inner membrane. Functionally, mitochondrial transporter that mediates uptake of thiamine pyrophosphate (ThPP) into mitochondria. In Aspergillus niger (strain ATCC MYA-4892 / CBS 513.88 / FGSC A1513), this protein is Mitochondrial thiamine pyrophosphate carrier 1 (tpc1).